A 138-amino-acid polypeptide reads, in one-letter code: Small ribosomal subunit protein uS12m (138 aa).

A mitochondrion-targeting transit peptide spans 1-29 (MSWSGLLHGLNTSLTCGPALVPRLWATCS). Residues 36–56 (MHRLGPPKRPPRKLGPTEGRP) form a disordered region.

The protein belongs to the universal ribosomal protein uS12 family. Component of the mitochondrial small ribosomal subunit (mt-SSU). Mature mammalian 55S mitochondrial ribosomes consist of a small (28S) and a large (39S) subunit. The 28S small subunit contains a 12S ribosomal RNA (12S mt-rRNA) and 30 different proteins. The 39S large subunit contains a 16S rRNA (16S mt-rRNA), a copy of mitochondrial valine transfer RNA (mt-tRNA(Val)), which plays an integral structural role, and 52 different proteins.

It localises to the mitochondrion. The protein is Small ribosomal subunit protein uS12m (MRPS12) of Homo sapiens (Human).